Reading from the N-terminus, the 746-residue chain is NAD(P)H-quinone oxidoreductase subunit 5, chloroplastic (746 aa).

16 consecutive transmembrane segments (helical) span residues 9–29 (WIIP…LLLF), 40–60 (WTFL…YLSI), 89–109 (IDPL…LVLI), 125–145 (FAYM…SNLI), 147–167 (VYFF…FWFT), 185–205 (GDFG…SFEF), 221–241 (VNLL…IAKS), 258–278 (TPIS…FLVA), 280–300 (LLPL…IGII), 327–347 (LGYM…FHLI), 354–374 (ALLF…VGYS), 396–416 (TAFL…CFWS), 425–445 (LLFS…TAFY), 547–567 (ILFP…IGIP), 608–628 (FSVS…KPFY), and 723–743 (YLFL…FFYF).

This sequence belongs to the complex I subunit 5 family. In terms of assembly, NDH is composed of at least 16 different subunits, 5 of which are encoded in the nucleus.

The protein resides in the plastid. The protein localises to the chloroplast thylakoid membrane. It carries out the reaction a plastoquinone + NADH + (n+1) H(+)(in) = a plastoquinol + NAD(+) + n H(+)(out). It catalyses the reaction a plastoquinone + NADPH + (n+1) H(+)(in) = a plastoquinol + NADP(+) + n H(+)(out). In terms of biological role, NDH shuttles electrons from NAD(P)H:plastoquinone, via FMN and iron-sulfur (Fe-S) centers, to quinones in the photosynthetic chain and possibly in a chloroplast respiratory chain. The immediate electron acceptor for the enzyme in this species is believed to be plastoquinone. Couples the redox reaction to proton translocation, and thus conserves the redox energy in a proton gradient. The chain is NAD(P)H-quinone oxidoreductase subunit 5, chloroplastic (ndhF) from Lepidium virginicum (Virginia pepperweed).